The primary structure comprises 492 residues: MDPYKYRPSSAFNSPFCTTNSGAPVFNNNSSLTVGARGPVLLEDYHLVEKLANFDRERIAERVVHARGASAKGFFEVTHDIAHLTCADFLRAPGVQTPVIVRFSTVIHERGSPETLRDPRGFAVKFYTREGNFDLVGNNFPVFFIRDGMKFPDMVHALKPNPKSHIQENWRVLDFFSHHPESLHMFTFLFDDIGIPQDYRHMDGSGVHTFTLINRAGKSTYVKFHWKPTCGVKSLLEEKAIRVGGANHSHATQDLYDSIAAGNYPEWKPSIQIMGPEHEDKFDFDPLDVTKTWPEDILPLQPVGRLVLNKNIDNFLYMNEQLAFCPSIVVPGVYYSDDKMLQTRIFSYSDTQRYRLGPNYLQLPANAPKCAHHNNHYDGSMNFMHRDEEIDYFPSRYDQVRHAEVYPIPSTVCSGKREKCIIQKENNFKQPGERYRSFTPDRQERFIRRWVEALSDPRITYEIRSIWITYWSQADKSLGQKLASRLNVRPSI.

Active-site residues include His65 and Asn138. Tyr348 contacts heme.

It belongs to the catalase family. In terms of assembly, homotetramer. Requires heme as cofactor.

The protein localises to the peroxisome. The enzyme catalyses 2 H2O2 = O2 + 2 H2O. In terms of biological role, occurs in almost all aerobically respiring organisms and serves to protect cells from the toxic effects of hydrogen peroxide. This chain is Catalase isozyme 2 (CAT2), found in Solanum lycopersicum (Tomato).